Reading from the N-terminus, the 424-residue chain is MSRKLFRNGRIFTPTDRGVPLAGKHQGDVIHIPRGAIYAKDGVIEAVGDEREVLAGISAGQVDEEIDCRGYCVIPGFVDPHTHMCFAKTREEEFLLRIEGMEYLEILGRGGGILSSVRAARAATEDELFAFTRKHVMTALGLGTTTLEIKSGYGLDTESELRMLRVIERIGRETPLDVVPTFLGAHAIPEEHVAHPDGYVDLVVHEMLPAVARHSGAVFCDVFCEAGVFSVAQSRRVLEAARGVGLELKIHTDEVHDLGGSALAAELRATSAEHLLRTSETNLRAMAEAGVVGILLPATAYSLRRRYAPARRMVELGLPVAVATDCNPGTAYTESMPFVYGLAVLGMGLSMQEALVAATLNGAYAIGQGGRVGSLEVGKSADFLLLDGKSPAILAYHIGVSPVVEVYKQANPMRQWEGITGDHP.

The Fe(3+) site is built by His81 and His83. 2 residues coordinate Zn(2+): His81 and His83. Residues Arg90, Tyr153, and His186 each contribute to the 4-imidazolone-5-propanoate site. N-formimidoyl-L-glutamate is bound at residue Tyr153. His251 serves as a coordination point for Fe(3+). His251 contributes to the Zn(2+) binding site. Glu254 contacts 4-imidazolone-5-propanoate. Asp325 contacts Fe(3+). Position 325 (Asp325) interacts with Zn(2+). N-formimidoyl-L-glutamate-binding residues include Asn327 and Gly329. A 4-imidazolone-5-propanoate-binding site is contributed by Thr330.

Belongs to the metallo-dependent hydrolases superfamily. HutI family. It depends on Zn(2+) as a cofactor. Fe(3+) serves as cofactor.

The protein resides in the cytoplasm. The enzyme catalyses 4-imidazolone-5-propanoate + H2O = N-formimidoyl-L-glutamate. It functions in the pathway amino-acid degradation; L-histidine degradation into L-glutamate; N-formimidoyl-L-glutamate from L-histidine: step 3/3. In terms of biological role, catalyzes the hydrolytic cleavage of the carbon-nitrogen bond in imidazolone-5-propanoate to yield N-formimidoyl-L-glutamate. It is the third step in the universal histidine degradation pathway. The sequence is that of Imidazolonepropionase from Syntrophobacter fumaroxidans (strain DSM 10017 / MPOB).